A 122-amino-acid chain; its full sequence is Large ribosomal subunit protein uL14c (122 aa).

The protein belongs to the universal ribosomal protein uL14 family. As to quaternary structure, part of the 50S ribosomal subunit.

It localises to the plastid. The protein resides in the chloroplast. In terms of biological role, binds to 23S rRNA. The protein is Large ribosomal subunit protein uL14c of Illicium oligandrum (Star anise).